The sequence spans 81 residues: uncharacterized protein (81 aa).

The protein to yeast YDL157C.

It localises to the mitochondrion. This is an uncharacterized protein from Schizosaccharomyces pombe (strain 972 / ATCC 24843) (Fission yeast).